Consider the following 617-residue polypeptide: Probable potassium transport system protein Kup 3 (617 aa).

A run of 11 helical transmembrane segments spans residues 42–62, 95–115, 129–149, 160–180, 206–226, 240–260, 282–302, 330–350, 360–380, 386–406, and 411–431; these read VASL…ALLI, LVVG…TPAI, PSLA…LFMM, IFGP…IHGI, VSFA…AMYA, WFAI…ALLI, LVAF…SGVF, IYVP…VLSF, YGIA…LVAI, PWLV…FFSA, and LFEG…MMLT.

The protein belongs to the HAK/KUP transporter (TC 2.A.72) family.

Its subcellular location is the cell inner membrane. It catalyses the reaction K(+)(in) + H(+)(in) = K(+)(out) + H(+)(out). Transport of potassium into the cell. Likely operates as a K(+):H(+) symporter. In Bradyrhizobium diazoefficiens (strain JCM 10833 / BCRC 13528 / IAM 13628 / NBRC 14792 / USDA 110), this protein is Probable potassium transport system protein Kup 3.